The following is a 550-amino-acid chain: Zinc finger protein 382 (550 aa).

Residues 1–105 (MPLQGSVSFK…RHSRPLIFIN (105 aa)) are mediates interaction with TRIM28. Represses transcription stretches follow at residues 5 to 46 (GSVS…FVSV) and 70 to 211 (IFPS…PEQP). A KRAB domain is found at 7 to 78 (VSFKDVTVDF…RIFPSYSYLE (72 aa)). The C2H2-type 1; degenerate zinc-finger motif lies at 212–234 (FDHNECEKSFLMKGMLFTHTRAH). C2H2-type zinc fingers lie at residues 296–318 (FHCP…QRIH), 324–346 (YVCN…EKTH), 352–374 (FICI…HKTH), 380–402 (YECP…QRTH), 408–430 (YQCN…QRTH), 436–458 (YICN…QRIH), 464–486 (YICN…HRIH), 492–514 (NGCP…QKTH), and 520–542 (YECK…QKTH). The tract at residues 296–550 (FHCPYCGNNF…THKVETTGIQ (255 aa)) is required for transcriptional repression activity; probably mediates sequence-specific DNA-binding.

Belongs to the krueppel C2H2-type zinc-finger protein family. Interacts with TRIM28; enhances the transcriptional repressor activity. As to expression, specifically expressed in heart with a weaker expression also detected in skeletal muscle.

It localises to the nucleus. Its function is as follows. Functions as a sequence-specific transcriptional repressor. The sequence is that of Zinc finger protein 382 (ZNF382) from Homo sapiens (Human).